A 471-amino-acid polypeptide reads, in one-letter code: Glutamate--tRNA ligase (471 aa).

The short motif at 9-19 (PSPTGYLHVGG) is the 'HIGH' region element. Positions 98, 100, 125, and 127 each coordinate Zn(2+). The 'KMSKS' region motif lies at 237–241 (KLSKR). Lys240 is an ATP binding site.

This sequence belongs to the class-I aminoacyl-tRNA synthetase family. Glutamate--tRNA ligase type 1 subfamily. In terms of assembly, monomer. Zn(2+) serves as cofactor.

Its subcellular location is the cytoplasm. The catalysed reaction is tRNA(Glu) + L-glutamate + ATP = L-glutamyl-tRNA(Glu) + AMP + diphosphate. Catalyzes the attachment of glutamate to tRNA(Glu) in a two-step reaction: glutamate is first activated by ATP to form Glu-AMP and then transferred to the acceptor end of tRNA(Glu). The polypeptide is Glutamate--tRNA ligase (Salmonella paratyphi A (strain ATCC 9150 / SARB42)).